The sequence spans 597 residues: uncharacterized protein (597 aa).

The region spanning 378–575 (EVSFVVDNSG…YLPRELLRTL (198 aa)) is the VWFA domain.

This is an uncharacterized protein from Treponema pallidum (strain Nichols).